Reading from the N-terminus, the 1042-residue chain is Starch synthase 3, chloroplastic/amyloplastic (1042 aa).

The N-terminal 44 residues, 1–44, are a transit peptide targeting the chloroplast; the sequence is MISYFLNQDFSRKKQGRMAASGPKSSGPRGFGRRTTVGSAQKRT. Residues 1–63 are disordered; sequence MISYFLNQDF…NATSTATNEV (63 aa). Polar residues predominate over residues 54–63; sequence NATSTATNEV. Residues 247–302 adopt a coiled-coil conformation; the sequence is ENFLLEEKLREQEKLAKEEAERERQKEEKRRIEAQKAAIEADRAQAKAETQKRREL. ADP-alpha-D-glucose is bound at residue Lys-608.

The protein belongs to the glycosyltransferase 1 family. Bacterial/plant glycogen synthase subfamily. As to expression, expressed in leaves and flowers.

Its subcellular location is the plastid. The protein localises to the chloroplast. It is found in the amyloplast. It carries out the reaction [(1-&gt;4)-alpha-D-glucosyl](n) + ADP-alpha-D-glucose = [(1-&gt;4)-alpha-D-glucosyl](n+1) + ADP + H(+). The protein operates within glycan biosynthesis; starch biosynthesis. In terms of biological role, involved in the synthesis of glycan chains within amylopectin in leaves. May play a regulatory role in the control of starch accumulation in plastids. In Arabidopsis thaliana (Mouse-ear cress), this protein is Starch synthase 3, chloroplastic/amyloplastic (SS3).